The sequence spans 264 residues: Aminoglycoside 3'-phosphotransferase (264 aa).

Residue Asp-190 is the Proton acceptor of the active site.

Belongs to the aminoglycoside phosphotransferase family.

The enzyme catalyses kanamycin A + ATP = kanamycin 3'-phosphate + ADP + H(+). Resistance to kanamycin and structurally-related aminoglycosides, including amikacin. This chain is Aminoglycoside 3'-phosphotransferase (aphA), found in Enterococcus faecalis (Streptococcus faecalis).